Here is a 369-residue protein sequence, read N- to C-terminus: Anthranilate phosphoribosyltransferase (369 aa).

Residues Gly85, 88–89 (GD), Thr93, 95–98 (NLST), 113–121 (KHGNRAASS), and Ser125 contribute to the 5-phospho-alpha-D-ribose 1-diphosphate site. Position 85 (Gly85) interacts with anthranilate. Mg(2+) is bound at residue Ser97. Asn116 contacts anthranilate. Arg171 contacts anthranilate. Mg(2+)-binding residues include Asp229 and Glu230.

This sequence belongs to the anthranilate phosphoribosyltransferase family. In terms of assembly, homodimer. Mg(2+) serves as cofactor.

It carries out the reaction N-(5-phospho-beta-D-ribosyl)anthranilate + diphosphate = 5-phospho-alpha-D-ribose 1-diphosphate + anthranilate. The protein operates within amino-acid biosynthesis; L-tryptophan biosynthesis; L-tryptophan from chorismate: step 2/5. In terms of biological role, catalyzes the transfer of the phosphoribosyl group of 5-phosphorylribose-1-pyrophosphate (PRPP) to anthranilate to yield N-(5'-phosphoribosyl)-anthranilate (PRA). This Frankia alni (strain DSM 45986 / CECT 9034 / ACN14a) protein is Anthranilate phosphoribosyltransferase.